The chain runs to 397 residues: SET domain-containing protein 4 (397 aa).

The SET domain occupies 29 to 245 (AKLEPCRFKE…KCSEVFINYG (217 aa)). Y244 contacts S-adenosyl-L-methionine.

It belongs to the class V-like SAM-binding methyltransferase superfamily. SETD4 family.

Its subcellular location is the nucleus. The catalysed reaction is L-lysyl(79)-[histone H3] + 3 S-adenosyl-L-methionine = N(6),N(6),N(6)-trimethyl-L-lysyl(79)-[histone H3] + 3 S-adenosyl-L-homocysteine + 3 H(+). It catalyses the reaction L-lysyl(20)-[histone H4] + S-adenosyl-L-methionine = N(6)-methyl-L-lysyl(20)-[histone H4] + S-adenosyl-L-homocysteine + H(+). It carries out the reaction N(6)-methyl-L-lysyl(20)-[histone H4] + S-adenosyl-L-methionine = N(6),N(6)-dimethyl-L-lysyl(20)-[histone H4] + S-adenosyl-L-homocysteine + H(+). The enzyme catalyses N(6),N(6)-dimethyl-L-lysyl(20)-[histone H4] + S-adenosyl-L-methionine = N(6),N(6),N(6)-trimethyl-L-lysyl(20)-[histone H4] + S-adenosyl-L-homocysteine + H(+). In terms of biological role, protein-lysine N-methyltransferase involved in the regulation of cell quiescence by catalyzing the trimethylation of 'Lys-20' of histone H4 and 'Lys-79' of histone H3 (H4K20me3 and H3K79me3, respectively) during diapause formation, a state of obligate dormancy. This Artemia parthenogenetica (Brine shrimp) protein is SET domain-containing protein 4.